The chain runs to 687 residues: Sphingoid long chain base kinase 5 (687 aa).

Residues 1–20 (MTLKPSKRRKGRSRHSRKKQ) form a disordered region. Residues cysteine 91 and cysteine 94 are each lipidated (S-palmitoyl cysteine; by AKR1). The span at 101-116 (IDRSETSTTDTSKDDL) shows a compositional bias: basic and acidic residues. Disordered regions lie at residues 101–130 (IDRSETSTTDTSKDDLSANPKLHYPSVNGQ) and 180–207 (DELESSQKKERKGNSLSRGSNSSSSLLT). The segment covering 193 to 207 (NSLSRGSNSSSSLLT) has biased composition (low complexity). In terms of domain architecture, DAGKc spans 266–405 (RRNKSIFVII…IDLMCCSQPS (140 aa)). Residues 276 to 278 (NPF) and threonine 308 contribute to the ATP site. Substrate is bound at residue 333–336 (SGDG). The Proton donor/acceptor role is filled by aspartate 335. Residues glutamate 340, 366–368 (GSG), arginine 434, and arginine 440 each bind ATP. Residues 506–524 (EYETENEDEDEDADADDED) show a composition bias toward acidic residues. The tract at residues 506 to 525 (EYETENEDEDEDADADDEDS) is disordered. 652 to 654 (DGE) lines the ATP pocket.

The protein resides in the golgi apparatus membrane. The catalysed reaction is (4R)-hydroxysphinganine + ATP = (4R)-hydroxysphinganine 1-phosphate + ADP + H(+). The enzyme catalyses a sphingoid base + ATP = a sphingoid 1-phosphate + ADP + H(+). It carries out the reaction sphinganine + ATP = sphinganine 1-phosphate + ADP + H(+). Catalyzes the phosphorylation of the sphingoid long chain bases dihydrosphingosine (DHS or sphinganine) and phytosphingosine (PHS) to form dihydrosphingosine 1-phosphate (DHS-1P) and phytosphingosine 1-phosphate (PHS-1P) respectively. Redundant to LCB4, is only responsible for few percent of the total activity. Involved in the biosynthesis of sphingolipids and ceramides. Involved in heat-induced transient cell cycle arrest. Accumulation of phosphorylated sphingoid long chain bases (LCBPs) stimulates calcium influx and activates calcineurin signaling. Involved in heat-stress resistance. This is Sphingoid long chain base kinase 5 (LCB5) from Saccharomyces cerevisiae (strain ATCC 204508 / S288c) (Baker's yeast).